Consider the following 457-residue polypeptide: CUB1 family protein C30C2.08 (457 aa).

Coiled coils occupy residues 119–174 (TQND…NISK) and 418–448 (QELV…EERE).

The protein belongs to the CUB1 family.

The protein localises to the cytoplasm. The protein resides in the nucleus. Involved in bleomycin tolerance with links to DNA repair and/or proteasome function. This is CUB1 family protein C30C2.08 from Schizosaccharomyces pombe (strain 972 / ATCC 24843) (Fission yeast).